The chain runs to 35 residues: N-acylglucosamine 2-epimerase (35 aa).

The segment at 1–21 (LNLVDQLGEADEELAGTYAEL) is leucine-zipper.

It belongs to the N-acylglucosamine 2-epimerase family. Homodimer. Forms a heterodimer with renin and inhibits its activity.

It catalyses the reaction an N-acyl-D-glucosamine = an N-acyl-D-mannosamine. It participates in amino-sugar metabolism; N-acetylneuraminate degradation. Functionally, catalyzes the interconversion of N-acetylglucosamine to N-acetylmannosamine. Involved in the N-glycolylneuraminic acid (Neu5Gc) degradation pathway. The polypeptide is N-acylglucosamine 2-epimerase (Canis lupus familiaris (Dog)).